Consider the following 184-residue polypeptide: Ribosome-recycling factor (184 aa).

This sequence belongs to the RRF family.

The protein resides in the cytoplasm. Its function is as follows. Responsible for the release of ribosomes from messenger RNA at the termination of protein biosynthesis. May increase the efficiency of translation by recycling ribosomes from one round of translation to another. This chain is Ribosome-recycling factor, found in Acholeplasma laidlawii (strain PG-8A).